The chain runs to 367 residues: Protein SGT1 homolog (367 aa).

TPR repeat units lie at residues 6–39 (ASDL…SPAT), 40–73 (AELY…DPSM), and 75–107 (KAYL…ASGD). The region spanning 165–254 (KPKYRHDFYN…AEQITWTSLD (90 aa)) is the CS domain. Disordered regions lie at residues 261–289 (AVPQ…DWDK) and 347–367 (VGSK…KWEY). An SGS domain is found at 277–367 (SYPSSKSKKD…DGMELKKWEY (91 aa)).

The protein belongs to the SGT1 family. In terms of assembly, interacts (via CS domain) with RAR1 (via CHORD 2 domain). Interacts with RAD6. In terms of tissue distribution, expressed in roots, root tips, shoot apical meristem (SAM), young leaves, flag leaves and ears.

The protein localises to the cytoplasm. It localises to the nucleus. In terms of biological role, involved in basal disease resistance to bacterial blight (X.oryzae). May act as positive regulator of basal defense. Probably required for SCF-mediated ubiquitination, by coupling HSP90 to SCF complex for ubiquitination of HSP90 client proteins. The sequence is that of Protein SGT1 homolog from Oryza sativa subsp. japonica (Rice).